Consider the following 1032-residue polypeptide: Chitin synthase 8 (1032 aa).

2 stretches are compositionally biased toward pro residues: residues 1 to 11 and 26 to 41; these read MRPGDIYPPPQ and PPQPQPYPPQPYPPQQ. Positions 1–220 are disordered; the sequence is MRPGDIYPPP…DDDMNDSHPL (220 aa). Composition is skewed to polar residues over residues 65–78, 98–107, and 143–160; these read MSPTPQEPQGSRYN, LPTQSLSPFN, and TNPSHLPPQQQLTPSYSY. N-linked (GlcNAc...) asparagine glycosylation is present at N78. Positions 176 to 188 are enriched in low complexity; sequence PHHSSQSSVSSIP. N-linked (GlcNAc...) asparagine glycans are attached at residues N215, N304, N473, N545, and N691. 7 consecutive transmembrane segments (helical) span residues 728–748, 762–782, 796–816, 842–862, 870–890, 972–992, and 995–1015; these read TLNMVFAWFALGNYYIAFFVL, VNIPLHYIYIALLLWCFLLSL, SMVGFALITIYMLFAAIFLAV, IVISLLATYGLYIISSLMALE, FFQYLLIAPSYINVLNVYAFC, VLLVWTMTNGALVAVILQASG, and NSLATTYMGVLLYTVAGLAFF.

This sequence belongs to the chitin synthase family.

It is found in the cell membrane. The catalysed reaction is [(1-&gt;4)-N-acetyl-beta-D-glucosaminyl](n) + UDP-N-acetyl-alpha-D-glucosamine = [(1-&gt;4)-N-acetyl-beta-D-glucosaminyl](n+1) + UDP + H(+). In terms of biological role, polymerizes chitin, a structural polymer of the cell wall and septum, by transferring the sugar moiety of UDP-GlcNAc to the non-reducing end of the growing chitin polymer. This is Chitin synthase 8 from Cryptococcus neoformans var. grubii serotype A (strain H99 / ATCC 208821 / CBS 10515 / FGSC 9487) (Filobasidiella neoformans var. grubii).